Reading from the N-terminus, the 83-residue chain is Translation initiation factor IF-1 (83 aa).

One can recognise an S1-like domain in the interval 1–72 (MAKEESIEMQ…TRGRIVYREA (72 aa)).

Belongs to the IF-1 family. In terms of assembly, component of the 30S ribosomal translation pre-initiation complex which assembles on the 30S ribosome in the order IF-2 and IF-3, IF-1 and N-formylmethionyl-tRNA(fMet); mRNA recruitment can occur at any time during PIC assembly.

The protein localises to the cytoplasm. In terms of biological role, one of the essential components for the initiation of protein synthesis. Stabilizes the binding of IF-2 and IF-3 on the 30S subunit to which N-formylmethionyl-tRNA(fMet) subsequently binds. Helps modulate mRNA selection, yielding the 30S pre-initiation complex (PIC). Upon addition of the 50S ribosomal subunit IF-1, IF-2 and IF-3 are released leaving the mature 70S translation initiation complex. The polypeptide is Translation initiation factor IF-1 (Coxiella burnetii (strain Dugway 5J108-111)).